The following is a 550-amino-acid chain: Mitochondrial distribution and morphology protein 34 (550 aa).

Positions 1–208 (MAFNFNWSPL…CPEQMSKEDH (208 aa)) constitute an SMP-LTD domain. 3 disordered regions span residues 294 to 313 (VDKP…LVKS), 358 to 505 (RNAK…ILEQ), and 519 to 550 (VYDE…TAAS). Residues 300 to 310 (SSTTPLTTPSL) are compositionally biased toward low complexity. The span at 364–376 (ANRKKKTRVVNLR) shows a compositional bias: basic residues. Composition is skewed to polar residues over residues 391 to 407 (MSDS…TMSD) and 458 to 467 (AEISQPQVAR). Basic and acidic residues predominate over residues 481–495 (SENDKRSDSKRRGPR).

This sequence belongs to the MDM34 family. As to quaternary structure, component of the ER-mitochondria encounter structure (ERMES) or MDM complex, composed of MMM1, MDM10, MDM12 and MDM34.

Its subcellular location is the mitochondrion outer membrane. Its function is as follows. Component of the ERMES/MDM complex, which serves as a molecular tether to connect the endoplasmic reticulum (ER) and mitochondria. Components of this complex are involved in the control of mitochondrial shape and protein biogenesis, and function in nonvesicular lipid trafficking between the ER and mitochondria. MDM34 is required for the interaction of the ER-resident membrane protein MMM1 and the outer mitochondrial membrane-resident beta-barrel protein MDM10. This Pyricularia oryzae (strain 70-15 / ATCC MYA-4617 / FGSC 8958) (Rice blast fungus) protein is Mitochondrial distribution and morphology protein 34.